Consider the following 234-residue polypeptide: Adenosine 5'-phosphosulfate reductase (234 aa).

The [4Fe-4S] cluster site is built by cysteine 120, cysteine 121, cysteine 203, and cysteine 206. The active-site Nucleophile; cysteine thiosulfonate intermediate is the cysteine 229.

Belongs to the PAPS reductase family. CysH subfamily. It depends on [4Fe-4S] cluster as a cofactor.

The protein resides in the cytoplasm. The catalysed reaction is [thioredoxin]-disulfide + sulfite + AMP + 2 H(+) = adenosine 5'-phosphosulfate + [thioredoxin]-dithiol. Its pathway is sulfur metabolism; hydrogen sulfide biosynthesis; sulfite from sulfate. Its function is as follows. Catalyzes the formation of sulfite from adenosine 5'-phosphosulfate (APS) using thioredoxin as an electron donor. In Bacillus cereus (strain AH820), this protein is Adenosine 5'-phosphosulfate reductase.